The chain runs to 377 residues: MPHSVTPSIEQDSLKIAILGAAGGIGQSLSLLLKAQLQYQLKESNRSVTHIHLALYDVNQEAINGVTADLSHIDTPISVSSHSPAGGIENCLHNASIVVIPAGVPRKPGMTRDDLFNVNAGIISQLGDSIAECCDLSKVFVLVISNPVNSLVPVMVSNILKNHPQSRNSGIERRIMGVTKLDIVRASTFLREINIESGLTPRVNSMPDVPVIGGHSGETIIPLFSQSNFLSRLNEDQLKYLIHRVQYGGDEVVKAKNGKGSATLSMAHAGYKCVVQFVSLLLGNIEQIHGTYYVPLKDANNFPIAPGADQLLPLVDGADYFAIPLTITTKGVSYVDYDIVNRMNDMERNQMLPICVSQLKKNIDKGLEFVASRSASS.

The short motif at 2 to 5 (PHSV) is the Pro/N-degron element. The residue at position 6 (T6) is a Phosphothreonine. NAD(+) contacts are provided by residues 20–26 (GAAGGIG) and D57. Positions 106 and 112 each coordinate substrate. Residues N119 and 144–146 (ISN) each bind NAD(+). Residues N146 and R185 each coordinate substrate. The Proton acceptor role is filled by H215. Position 266 (M266) interacts with NAD(+).

The protein belongs to the LDH/MDH superfamily. MDH type 1 family. Homodimer. In terms of processing, targeted for proteasomal degradation when cells are shifted to glucose-containing growth medium.

It is found in the cytoplasm. It carries out the reaction (S)-malate + NAD(+) = oxaloacetate + NADH + H(+). In terms of biological role, the isoenzyme MDH2 may function primarily in the glyoxylate cycle. The polypeptide is Malate dehydrogenase, cytoplasmic (MDH2) (Saccharomyces cerevisiae (strain ATCC 204508 / S288c) (Baker's yeast)).